Consider the following 393-residue polypeptide: Staphopain B (393 aa).

The N-terminal stretch at 1-36 (MNSSCKTRVFNIISIIMVSMLILSLGAFANNNKAKA) is a signal peptide. Residues 37 to 219 (DSHSKQLEIN…KVEENEAIQE (183 aa)) constitute a propeptide that is removed on maturation. Residues Cys243, His340, and Asn360 contribute to the active site.

The protein belongs to the peptidase C47 family. In the cytoplasm, prematurely activated/folded SspB forms a stable non-covalent complex with SspC. Post-translationally, proteolytically cleaved by staphylococcal serine protease (SspA).

The protein localises to the secreted. Its activity is regulated as follows. Prematurely activated/folded staphopain B is inhibited by staphostatin B (SspC), which is probably required to protect staphylococcal cytoplasmic proteins from degradation by SspB. Functionally, cysteine protease that plays an important role in the inhibition of host innate immune response. Degrades host elastin, fibrogen, fibronectin and kininogen. Blocks phagocytosis of opsonised S.aureus by neutrophils and monocytes by inducing their death in a proteolytic activity-dependent manner. Decreases surface expression of the 'don't eat me' signal CD31 on neutrophils. Cleaves host galectin-3/LGALS3, thereby inhibiting the neutrophil-activating ability of the lectin. This is Staphopain B (sspB) from Staphylococcus aureus (strain MRSA252).